The chain runs to 703 residues: Zinc finger protein 750 (703 aa).

A CCHC-type zinc finger spans residues Y25–N51. Positions 27, 30, 43, and 49 each coordinate Zn(2+). Disordered regions lie at residues D60–S96, G121–V147, P362–Q617, and N633–S703. The segment covering K67 to Q78 has biased composition (polar residues). The segment covering P79–S93 has biased composition (low complexity). Over residues T375–G399 the composition is skewed to basic and acidic residues. Residues S418–P428 show a composition bias toward polar residues. Over residues S583 to S592 the composition is skewed to low complexity. Residues Q605–K616 show a composition bias toward basic and acidic residues.

The protein resides in the nucleus. Functionally, transcription factor involved in epidermis differentiation. Required for terminal epidermal differentiation: acts downstream of p63/TP63 and activates expression of late epidermal differentiation genes. Specifically binds to the promoter of KLF4 and promotes its expression. This is Zinc finger protein 750 (ZNF750) from Bos taurus (Bovine).